A 2107-amino-acid polypeptide reads, in one-letter code: Dysferlin (2107 aa).

Positions 1–101 constitute a C2 1 domain; it reads MLRVFILYAE…LATPSLSASF (101 aa). Aspartate 18, isoleucine 19, aspartate 21, and asparagine 40 together coordinate Ca(2+). The segment covering 132–144 has biased composition (pro residues); sequence TFPPLTPLEPSPT. The segment at 132 to 221 is disordered; the sequence is TFPPLTPLEP…SKPLSDKPQD (90 aa). The segment covering 155-172 has biased composition (acidic residues); that stretch reads GGEEDTEDQGLTGDEAEP. Position 166 is a phosphothreonine (threonine 166). 6 C2 domains span residues 205–323, 362–498, 1138–1264, 1312–1440, 1588–1706, and 1822–1970; these read KRSA…RKWL, DKED…EEEP, GVNR…PLTR, PPPQ…EESP, PLPP…ARCG, and GRPG…EKCS. 9 residues coordinate Ca(2+): aspartate 411, aspartate 419, aspartate 467, aspartate 469, aspartate 475, aspartate 1170, aspartate 1176, aspartate 1232, and aspartate 1234. The Ca(2+) site is built by aspartate 1621, aspartate 1627, aspartate 1676, aspartate 1678, aspartate 1941, serine 1944, and aspartate 1947. The interval 2021–2044 is disordered; that stretch reads ESEHEERPAGHGRDEPNMNPKLED. Residues 2074–2094 form a helical membrane-spanning segment; the sequence is IIFFLILFIFLLFLGIFVYSF.

Belongs to the ferlin family. Interacts with CACNA1S, CAV3 and PARVB. Interacts with ANXA1; the interaction is Ca(2+)- and injury state-dependent. Interacts with ANXA2; the interaction is Ca(2+)- and injury state-dependent. Interacts with AHNAK; the interaction is direct and Ca(2+)-independent. Interacts with AHNAK2; the interaction is direct and Ca(2+)-independent. Interacts with TRIM72/MG53; interaction is required for transport to sites of cell injury during repair patch formation. Interacts with RIPOR2; this interaction occurs during early myogenic differentiation. It depends on Ca(2+) as a cofactor.

The protein localises to the cell membrane. Its subcellular location is the sarcolemma. It localises to the cytoplasmic vesicle membrane. Functionally, key calcium ion sensor involved in the Ca(2+)-triggered synaptic vesicle-plasma membrane fusion. Plays a role in the sarcolemma repair mechanism of both skeletal muscle and cardiomyocytes that permits rapid resealing of membranes disrupted by mechanical stress. This is Dysferlin (DYSF) from Bos taurus (Bovine).